The sequence spans 238 residues: Flagellar L-ring protein (238 aa).

Residues 1–23 (MIKLFICQKKYYLTAIFLLTIQS) form the signal peptide. C24 is lipidated: N-palmitoyl cysteine. The S-diacylglycerol cysteine moiety is linked to residue C24.

It belongs to the FlgH family. The basal body constitutes a major portion of the flagellar organelle and consists of four rings (L,P,S, and M) mounted on a central rod.

It is found in the cell outer membrane. It localises to the bacterial flagellum basal body. Assembles around the rod to form the L-ring and probably protects the motor/basal body from shearing forces during rotation. In Buchnera aphidicola subsp. Acyrthosiphon pisum (strain 5A), this protein is Flagellar L-ring protein.